Consider the following 273-residue polypeptide: Chondrolectin (273 aa).

An N-terminal signal peptide occupies residues 1–21 (MSRVVSLLLGAALLCGHGAFC). The Extracellular portion of the chain corresponds to 22–216 (RRVVSGQKVC…VVTEAGIIPN (195 aa)). Residues 35 to 179 (FKHPCYKMAY…CNMKHNYICK (145 aa)) enclose the C-type lectin domain. Cystine bridges form between Cys61–Cys178 and Cys144–Cys170. An N-linked (GlcNAc...) asparagine glycan is attached at Asn86. Residues 217–237 (LIYVVIPTIPLLLLILVAFGT) form a helical membrane-spanning segment. Over 238-273 (CCFQMLHKSKGRTKTSPNQSTLWISKSTRKESGMEV) the chain is Cytoplasmic. The segment at 248-273 (GRTKTSPNQSTLWISKSTRKESGMEV) is disordered. Polar residues predominate over residues 251–263 (KTSPNQSTLWISK).

As to quaternary structure, interacts with RABGGTB. In terms of processing, N-glycosylated. As to expression, found in spleen, testis, prostate and fetal liver. Expression limited to vascular muscle of testis, smooth muscle of prostate stroma, heart muscle, skeletal muscle, crypts of small intestine, and red pulp of spleen. B lymphocytes express isoform 2 only; peripheral blood T lymphocytes express isoform 3 only; granulocytes and monocytes express neither isoform 2 nor isoform 3. During development of T lymphocytes, bone marrow progenitor cells express isoform 2 only; thymocytes at different stages of maturation express predominantly isoform 2 and weakly isoform 3, and mature thymocytes express only isoform 2.

The protein resides in the cytoplasm. It localises to the membrane. It is found in the endoplasmic reticulum. The protein localises to the endoplasmic reticulum membrane. May play a role in the development of the nervous system such as in neurite outgrowth and elongation. May be involved in motor axon growth and guidance. This is Chondrolectin (CHODL) from Homo sapiens (Human).